A 506-amino-acid chain; its full sequence is MSTSATNGTHYEQLHQGRTKMYKSKVDVVLGAQWGDEGKGKVVDMLASDVDIVCRCQGGNNAGHTVVANGTEFDFHLLPSGVVNEKCVSVIGNGVVIHLPSLFDEVLKNEAKGLQHLENRLIISDRAHLVFDFHQHVDGMQEAEKGGKSLGNGVVIHLPSLFDEVLKNEAKGLQHLENRLIISDRAHLVFDFHQHVDGMQEAEKGGKSLGTTKKGIGPAYSSKATRNGIRVGELLGDFNLFSEKFKSIVATHVRLFPSINVDVEAELARYKDYADKVRPYVKDTICFLHTALRNGKTILVEGANAAMLDIDFGTYPYVTSSNCSIGGVLTGLGLPPQTIGEVIGVVKAYTTRVGDGPFPTEQLNDIGDLLQTRGFEIGVTTKRKRRCGWLDIPLLKYTSLVNGYTCICVTKLDILDTLPEIKVAVAYKKPNGEKLDHFPGTIAELGSIEVEYAVLPGWQTSTEDVRNFKELPENAQSYVRFLESELSVPVRWVGVGKGRESIINVH.

GTP contacts are provided by residues 35-41 and 63-65; these read GDEGKGK and GHT. Catalysis depends on D36, which acts as the Proton acceptor. Positions 36 and 63 each coordinate Mg(2+). IMP is bound by residues 36-39, 61-64, T212, R226, N304, T319, and R383; these read DEGK and NAGH. The active-site Proton donor is H64. 379 to 385 serves as a coordination point for substrate; the sequence is VTTKRKR. GTP is bound by residues R385, 411 to 413, and 494 to 496; these read KLD and GVG.

Belongs to the adenylosuccinate synthetase family. Homodimer. Requires Mg(2+) as cofactor.

The protein resides in the cytoplasm. It carries out the reaction IMP + L-aspartate + GTP = N(6)-(1,2-dicarboxyethyl)-AMP + GDP + phosphate + 2 H(+). The protein operates within purine metabolism; AMP biosynthesis via de novo pathway; AMP from IMP: step 1/2. Its function is as follows. Plays an important role in the de novo pathway and in the salvage pathway of purine nucleotide biosynthesis. Catalyzes the first committed step in the biosynthesis of AMP from IMP. The polypeptide is Adenylosuccinate synthetase (Drosophila yakuba (Fruit fly)).